Here is a 225-residue protein sequence, read N- to C-terminus: Glutathione S-transferase Mu 5 (225 aa).

One can recognise a GST N-terminal domain in the interval Lys-5–Gly-92. Phosphoserine is present on Ser-6. Glutathione-binding positions include Tyr-11–Trp-12, Trp-50–Lys-54, Asn-63–Leu-64, and Gln-76–Ser-77. Residues Thr-94 to Ile-212 form the GST C-terminal domain. Residue Tyr-120 participates in substrate binding.

This sequence belongs to the GST superfamily. Mu family. In terms of assembly, homodimer. The N-terminus is blocked. As to expression, expressed in testis and brain. Very low expression in liver, kidney, heart and lung.

Its subcellular location is the cytoplasm. It carries out the reaction RX + glutathione = an S-substituted glutathione + a halide anion + H(+). In terms of biological role, conjugation of reduced glutathione to a wide number of exogenous and endogenous hydrophobic electrophiles. The chain is Glutathione S-transferase Mu 5 (Gstm5) from Rattus norvegicus (Rat).